Consider the following 367-residue polypeptide: Anhydro-N-acetylmuramic acid kinase (367 aa).

11-18 (GTSLDGVD) serves as a coordination point for ATP.

This sequence belongs to the anhydro-N-acetylmuramic acid kinase family.

It carries out the reaction 1,6-anhydro-N-acetyl-beta-muramate + ATP + H2O = N-acetyl-D-muramate 6-phosphate + ADP + H(+). It functions in the pathway amino-sugar metabolism; 1,6-anhydro-N-acetylmuramate degradation. The protein operates within cell wall biogenesis; peptidoglycan recycling. In terms of biological role, catalyzes the specific phosphorylation of 1,6-anhydro-N-acetylmuramic acid (anhMurNAc) with the simultaneous cleavage of the 1,6-anhydro ring, generating MurNAc-6-P. Is required for the utilization of anhMurNAc either imported from the medium or derived from its own cell wall murein, and thus plays a role in cell wall recycling. The polypeptide is Anhydro-N-acetylmuramic acid kinase (Bradyrhizobium diazoefficiens (strain JCM 10833 / BCRC 13528 / IAM 13628 / NBRC 14792 / USDA 110)).